A 464-amino-acid polypeptide reads, in one-letter code: Glutamate--tRNA ligase (464 aa).

Residues 9–19 carry the 'HIGH' region motif; it reads PSPTGYLHIGG. The short motif at 242 to 246 is the 'KMSKS' region element; that stretch reads KISKR. Lys245 provides a ligand contact to ATP.

Belongs to the class-I aminoacyl-tRNA synthetase family. Glutamate--tRNA ligase type 1 subfamily. Monomer.

The protein localises to the cytoplasm. It carries out the reaction tRNA(Glu) + L-glutamate + ATP = L-glutamyl-tRNA(Glu) + AMP + diphosphate. In terms of biological role, catalyzes the attachment of glutamate to tRNA(Glu) in a two-step reaction: glutamate is first activated by ATP to form Glu-AMP and then transferred to the acceptor end of tRNA(Glu). This Neisseria gonorrhoeae (strain ATCC 700825 / FA 1090) protein is Glutamate--tRNA ligase.